Here is a 228-residue protein sequence, read N- to C-terminus: Uracil-DNA glycosylase (228 aa).

Asp64 serves as the catalytic Proton acceptor.

This sequence belongs to the uracil-DNA glycosylase (UDG) superfamily. UNG family.

Its subcellular location is the cytoplasm. It carries out the reaction Hydrolyzes single-stranded DNA or mismatched double-stranded DNA and polynucleotides, releasing free uracil.. In terms of biological role, excises uracil residues from the DNA which can arise as a result of misincorporation of dUMP residues by DNA polymerase or due to deamination of cytosine. The sequence is that of Uracil-DNA glycosylase from Pectobacterium atrosepticum (strain SCRI 1043 / ATCC BAA-672) (Erwinia carotovora subsp. atroseptica).